We begin with the raw amino-acid sequence, 1810 residues long: MQTNEGEVEEESSSQVEQEDFVMEGHGKTPPPGEESKQEKEQEREEQLMEDKKRKKEDKKKKEATQKVTEQKTKVPEVTKPSLSQPTAASPIGSSPSPPVNGGNNAKRVAVPNGQPPSAARYMPREVPPRFRCQQDHKVLLKRGQPPPPSCMLLGGGAGPPPCTAPGANPNNNAQVTGALLQSESGTAPESTLGGAAASNYANSTWGPGASSNSGASPNPIHIWDKVIVDGSDMEEWPCIASKDTESSSENTTDNNSASNPGSEKSSLPGSTTSNKGKGSQCQAASSGNECNLGVWKSDPKAKSVQPPNSTSDSNNGLGNWRSTSGQDRIGPGSGFSNFNPNSNPSAWPALVQEGTSRKGALETESSSSSAQVSTVGQASREQQSKMENAGVNFVVSGREQAQIHNTDGPKNGNTNSLNLSSPNPMENKGMPFGMGLGNTSRSTDAPSQSTGDRKTGSVGSWGAARGPSGTDTVSGQSNSGNNGNNGKDREDSWKGASVPKPTGSKSDSWDNNNRSTGGSWNFGPQDNNDNKWGEGNKMTSGVSQGEWKQPTGSDELKIGEWSGPNQPNSSTGAWDNQKGHPLPENQGNAQAPCWGRSSSSAGSEVGGQSTGSNHKAGSSDSHNSGRRSYRPTHPDCQAVLQTLLSRTDLDPRVLSNTGWGQTQIKQDTVWDIEEVPRPEGKSDKGTEGWESAATQTKNSGGWGDAPSQSNQMKSGWGELSASTEWKDPKSTGGWNDYKNNNSSNWGGGRADEKTPSSWNESSCKDQGWGGGRQPNQGWTSGKNGWGEEVDQVKNNNWESSANKPVSGWGEGGQNEIGTWGNGGNTNLASKGGWEDCKRSPAWNETGRQPNSWNKQHQQQQQPPPPQPEASGSWGGPPPPPQGNVRPSNSNWSSGPQPTTPKDDEPSGWEEPSPQSISRKMDIDDGTSAWGDPNSYNYKNVNLWDKNSQGGPAPREPNLPTPMTGKSASVWSKSTPPAPDNGTSAWGEPNESSPGWGEMDDAGASTTGWGNTPANAPNAMKPNSKSMQDGWGESDGPVTGARHPSWEEEDDGGVWNTAGSQGSTSSHNSASWGQGGKKQMKCSLKGGNNDSWMNPLAKQFSNMGLLSQTEDNPSSKMDLSVDKKFDVDKRTMNLGDFNDIMRKDRPGFRPPNSKDLGTTDSGPYFEKGGSHGLFGNSTAQSRGLHTPVQPLSSSPGLRAQVPPQFISPQVSASMLKQFPNSGLNPGLFNVGPQLSPQQIAMLSQLPQIPQFQLACQLLLQQQQQQQQLLQNQRKISQAVRQQQEQQLARMVSALQQQQQQQQQQQRQPSMKHSPSHPVGPKPHLDNMVPNALNVGLPDLPTKGPIPGYGSGFSSGGMDYGMVGGKEAGTESRFKQWTSMMEGLPSVATQEATMHKNGAIVAPGKTRGGSPYNQFDIIPGDTLGGHTGPAGDSWLPAKSPPTNKIGSKSSNASWPPEFQPGVPWKGIQNIDPESDPYVTPGSVLGGTTTSPIVDTDHQLLRDNTTGSNSSLNTSLPSPGAWPYSASDNSFTNVHSTSAKFPDYKSTWSPDPIGHNPTHLSNKMWKNHISSRNTTPLTRPPPGLTNPKPASPWSSTAPRSVRGWGTQDSRIASASTWSDGGSVRPSYWLVLHNLTPQIDGSTLRTICMQHGPLLTFHLNLTQGTALIRYSTKQEAAKAQTALHMCVLGNTTILAEFATEDEVSRFLAQAQPPTPAATPSAPATGWQSLETSQNQADPVGPALNLFGGSTGLGQWSSSAGGSSGADLAGTSLWGPPNYSSSLWGVPTVEDPHRMGSPAPLLPGDLLGGGSDSI.

The span at 1 to 22 shows a compositional bias: acidic residues; sequence MQTNEGEVEEESSSQVEQEDFV. Disordered regions lie at residues 1–221, 235–1080, 1141–1196, and 1293–1329; these read MQTN…PNPI, EEWP…KKQM, MRKD…SSPG, and ALQQQQQQQQQQQRQPSMKHSPSHPVGPKPHLDNMVP. The stretch at 33-75 forms a coiled coil; the sequence is GEESKQEKEQEREEQLMEDKKRKKEDKKKKEATQKVTEQKTKV. Basic and acidic residues-rich tracts occupy residues 34 to 52 and 60 to 77; these read EESKQEKEQEREEQLMEDK and KKKEATQKVTEQKTKVPE. Positions 37–1028 are interaction with argonaute proteins; sequence KQEKEQEREE…AMKPNSKSMQ (992 aa). The span at 88–106 shows a compositional bias: low complexity; that stretch reads AASPIGSSPSPPVNGGNNA. The span at 123 to 139 shows a compositional bias: basic and acidic residues; the sequence is MPREVPPRFRCQQDHKV. The span at 165–174 shows a compositional bias: low complexity; it reads APGANPNNNA. A compositionally biased stretch (polar residues) spans 180-190; that stretch reads LLQSESGTAPE. Composition is skewed to low complexity over residues 207 to 220 and 248 to 260; these read GPGASSNSGASPNP and SSENTTDNNSASN. Composition is skewed to polar residues over residues 261–290 and 306–327; these read PGSEKSSLPGSTTSNKGKGSQCQAASSGNE and QPPNSTSDSNNGLGNWRSTSGQ. 3 stretches are compositionally biased toward low complexity: residues 335–346, 363–380, and 416–425; these read GFSNFNPNSNPS, ETESSSSSAQVSTVGQAS, and NSLNLSSPNP. Positions 438-451 are enriched in polar residues; the sequence is GNTSRSTDAPSQST. Low complexity predominate over residues 475–486; that stretch reads SGQSNSGNNGNN. 4 stretches are compositionally biased toward polar residues: residues 504 to 528, 564 to 575, 611 to 623, and 655 to 667; these read GSKSDSWDNNNRSTGGSWNFGPQDN, GPNQPNSSTGAW, TGSNHKAGSSDSH, and LSNTGWGQTQIKQ. The span at 675-688 shows a compositional bias: basic and acidic residues; sequence EVPRPEGKSDKGTE. 2 stretches are compositionally biased toward polar residues: residues 774-783 and 793-804; these read QPNQGWTSGK and VKNNNWESSANK. Positions 809–824 are enriched in gly residues; the sequence is WGEGGQNEIGTWGNGG. The segment covering 846–857 has biased composition (polar residues); sequence TGRQPNSWNKQH. Serine 913 carries the post-translational modification Phosphoserine. 5 stretches are compositionally biased toward polar residues: residues 934 to 950, 964 to 975, 1004 to 1027, 1057 to 1072, and 1175 to 1195; these read NSYNYKNVNLWDKNSQG, TGKSASVWSKST, ASTTGWGNTPANAPNAMKPNSKSM, TAGSQGSTSSHNSASW, and GNSTAQSRGLHTPVQPLSSSP. Residues 1191 to 1700 form a silencing domain; interaction with CNOT1 and PAN3 region; the sequence is LSSSPGLRAQ…LAEFATEDEV (510 aa). The span at 1295–1307 shows a compositional bias: low complexity; sequence QQQQQQQQQQQRQ. Serine 1409 carries the post-translational modification Phosphoserine. Threonine 1426 is subject to Phosphothreonine. At serine 1438 the chain carries Phosphoserine. At threonine 1441 the chain carries Phosphothreonine. The interval 1449-1467 is PABPC1-interacting motif-2 (PAM2); the sequence is SNASWPPEFQPGVPWKGIQ. A disordered region spans residues 1568 to 1619; sequence SSRNTTPLTRPPPGLTNPKPASPWSSTAPRSVRGWGTQDSRIASASTWSDGG. Residues 1604 to 1617 show a composition bias toward polar residues; it reads TQDSRIASASTWSD. One can recognise an RRM domain in the interval 1625–1697; the sequence is YWLVLHNLTP…TTILAEFATE (73 aa). 2 disordered regions span residues 1706–1740 and 1786–1810; these read QAQPPTPAATPSAPATGWQSLETSQNQADPVGPAL and EDPHRMGSPAPLLPGDLLGGGSDSI. A compositionally biased stretch (polar residues) spans 1722–1733; it reads GWQSLETSQNQA. Low complexity predominate over residues 1792–1801; sequence GSPAPLLPGD. 2 positions are modified to phosphoserine: serine 1793 and serine 1809.

It belongs to the GW182 family. As to quaternary structure, interacts with AGO1, AGO2, AGO3 and AGO4. Interacts with CNOT1; the interaction mediates the association with the CCR4-NOT complex. Interacts with PAN3; the interaction mediates the association with the PAN complex. Interacts with MOV10; the interaction is direct and RNA-dependent.

The protein resides in the cytoplasm. It is found in the P-body. Plays a role in RNA-mediated gene silencing by both micro-RNAs (miRNAs) and short interfering RNAs (siRNAs). Required for miRNA-dependent translational repression and siRNA-dependent endonucleolytic cleavage of complementary mRNAs by argonaute family proteins. As scaffolding protein associates with argonaute proteins bound to partially complementary mRNAs and simultaneously can recruit CCR4-NOT and PAN deadenylase complexes. In Mus musculus (Mouse), this protein is Trinucleotide repeat-containing gene 6B protein (Tnrc6b).